A 193-amino-acid chain; its full sequence is Xanthine phosphoribosyltransferase (193 aa).

Residues Leu-20 and Thr-27 each coordinate xanthine. Position 128 to 132 (128 to 132) interacts with 5-phospho-alpha-D-ribose 1-diphosphate; that stretch reads ANGQA. A xanthine-binding site is contributed by Lys-156.

The protein belongs to the purine/pyrimidine phosphoribosyltransferase family. Xpt subfamily. As to quaternary structure, homodimer.

It is found in the cytoplasm. It carries out the reaction XMP + diphosphate = xanthine + 5-phospho-alpha-D-ribose 1-diphosphate. Its pathway is purine metabolism; XMP biosynthesis via salvage pathway; XMP from xanthine: step 1/1. Its function is as follows. Converts the preformed base xanthine, a product of nucleic acid breakdown, to xanthosine 5'-monophosphate (XMP), so it can be reused for RNA or DNA synthesis. The sequence is that of Xanthine phosphoribosyltransferase from Streptococcus pneumoniae serotype 4 (strain ATCC BAA-334 / TIGR4).